The following is a 315-amino-acid chain: uncharacterized protein (315 aa).

This is an uncharacterized protein from Caenorhabditis elegans.